A 103-amino-acid polypeptide reads, in one-letter code: Histone H4 (103 aa).

Residues 1 to 14 are compositionally biased toward gly residues; the sequence is MTGRGKGGKGLGKG. The disordered stretch occupies residues 1–20; it reads MTGRGKGGKGLGKGGAKRHR. Lysine 6 and lysine 13 each carry N6-acetyl-N6-methyllysine; alternate. Residues 17 to 21 mediate DNA binding; that stretch reads KRHRK.

The protein belongs to the histone H4 family. In terms of assembly, the nucleosome is a histone octamer containing two molecules each of H2A, H2B, H3 and H4 assembled in one H3-H4 heterotetramer and two H2A-H2B heterodimers. The octamer wraps approximately 147 bp of DNA.

The protein localises to the nucleus. It localises to the chromosome. Functionally, core component of nucleosome. Nucleosomes wrap and compact DNA into chromatin, limiting DNA accessibility to the cellular machineries which require DNA as a template. Histones thereby play a central role in transcription regulation, DNA repair, DNA replication and chromosomal stability. DNA accessibility is regulated via a complex set of post-translational modifications of histones, also called histone code, and nucleosome remodeling. This is Histone H4 (His4) from Myrmica ruginodis (Red ant).